Here is a 582-residue protein sequence, read N- to C-terminus: ATP-dependent lipid A-core flippase (582 aa).

A run of 5 helical transmembrane segments spans residues 16–36, 63–83, 153–173, 253–273, and 275–295; these read LWPM…ALII, VLLW…ASGF, IIGL…ILIV, PIIQ…ASFP, and VMET…IALM. Residues 28 to 310 enclose the ABC transmembrane type-1 domain; it reads AVAAIALIIN…LTNVNAQFQR (283 aa). Positions 342–578 constitute an ABC transporter domain; the sequence is LEFRQVNFAY…NGAYAQLHRM (237 aa). 376-383 contributes to the ATP binding site; it reads GRSGSGKS.

The protein belongs to the ABC transporter superfamily. Lipid exporter (TC 3.A.1.106) family. Homodimer.

The protein resides in the cell inner membrane. The catalysed reaction is ATP + H2O + lipid A-core oligosaccharideSide 1 = ADP + phosphate + lipid A-core oligosaccharideSide 2.. In terms of biological role, involved in lipopolysaccharide (LPS) biosynthesis. Translocates lipid A-core from the inner to the outer leaflet of the inner membrane. Transmembrane domains (TMD) form a pore in the inner membrane and the ATP-binding domain (NBD) is responsible for energy generation. In Pectobacterium atrosepticum (strain SCRI 1043 / ATCC BAA-672) (Erwinia carotovora subsp. atroseptica), this protein is ATP-dependent lipid A-core flippase.